The primary structure comprises 309 residues: Taste receptor type 2 member 46 (309 aa).

Position 1 (M1) is a topological domain, extracellular. A helical membrane pass occupies residues 2–22; sequence ITFLPIIFSILIVVTFVIGNF. Topologically, residues 23–46 are cytoplasmic; sequence ANGFIALVNSIEWFKRQKISFADQ. A helical membrane pass occupies residues 47 to 67; it reads ILTALAVSRVGLLWVLVLNWY. Topologically, residues 68-86 are extracellular; the sequence is ATELNPAFNSIEVRITAYN. The chain crosses the membrane as a helical span at residues 87–107; sequence VWAVINHFSNWLATSLSIFYL. At 108 to 126 the chain is on the cytoplasmic side; sequence LKIANFSNLIFLHLKRRVK. Residues 127 to 147 traverse the membrane as a helical segment; that stretch reads SVVLVILLGPLLFLVCHLFVI. Residues 148–178 lie on the Extracellular side of the membrane; it reads NMNQIIWTKEYEGNMTWKIKLRSAMYLSNTT. N-linked (GlcNAc...) asparagine glycans are attached at residues N161 and N176. Residues 179–199 form a helical membrane-spanning segment; sequence VTILANLVPFTLTLISFLLLI. Residues 200–229 lie on the Cytoplasmic side of the membrane; that stretch reads CSLCKHLKKMQLHGKGSQDPSMKVHIKALQ. The helical transmembrane segment at 230–250 threads the bilayer; sequence TVTSFLLLCAIYFLSIIMSVW. At 251-259 the chain is on the extracellular side; the sequence is SFESLENKP. The helical transmembrane segment at 260–280 threads the bilayer; that stretch reads VFMFCEAIAFSYPSTHPFILI. At 281–309 the chain is on the cytoplasmic side; the sequence is WGNKKLKQTFLSVLWHVRYWVKGEKPSSS.

The protein belongs to the G-protein coupled receptor T2R family. Expressed in subsets of taste receptor cells of the tongue and exclusively in gustducin-positive cells. Expressed on ciliated airway epithelium.

It localises to the membrane. The protein resides in the cell projection. Its subcellular location is the cilium membrane. Functionally, receptor that may play a role in the perception of bitterness and is gustducin-linked. May play a role in sensing the chemical composition of the gastrointestinal content. The activity of this receptor may stimulate alpha gustducin, mediate PLC-beta-2 activation and lead to the gating of TRPM5. In airway epithelial cells, binding of bitter compounds increases the intracellular calcium ion concentration and stimulates ciliary beat frequency. In Homo sapiens (Human), this protein is Taste receptor type 2 member 46 (TAS2R46).